The primary structure comprises 162 residues: Photosystem II extrinsic protein V (162 aa).

Positions 1–25 (MFKKFSALFTLLFTLCLVNPMLVYS) are cleaved as a signal peptide. 4 residues coordinate heme c: Cys62, Cys65, His66, and His117.

It belongs to the cytochrome c family. PsbV subfamily. In terms of assembly, PSII is composed of 1 copy each of membrane proteins PsbA, PsbB, PsbC, PsbD, PsbE, PsbF, PsbH, PsbI, PsbJ, PsbK, PsbL, PsbM, PsbT, PsbX, PsbY, PsbZ, Psb30/Ycf12, at least 3 peripheral proteins of the oxygen-evolving complex and a large number of cofactors. It forms dimeric complexes. Requires heme c as cofactor.

It is found in the plastid. It localises to the chloroplast thylakoid membrane. In terms of biological role, one of the extrinsic, lumenal subunits of photosystem II (PSII). PSII is a light-driven water plastoquinone oxidoreductase, using light energy to abstract electrons from H(2)O, generating a proton gradient subsequently used for ATP formation. The extrinsic proteins stabilize the structure of photosystem II oxygen-evolving complex (OEC), the ion environment of oxygen evolution and protect the OEC against heat-induced inactivation. This Guillardia theta (Cryptophyte) protein is Photosystem II extrinsic protein V.